A 757-amino-acid chain; its full sequence is Polyribonucleotide nucleotidyltransferase (757 aa).

The Mg(2+) site is built by aspartate 525 and aspartate 531. The KH domain occupies proline 591 to valine 650. The S1 motif domain occupies glycine 662–valine 734. A disordered region spans residues glutamate 736–glycine 757.

This sequence belongs to the polyribonucleotide nucleotidyltransferase family. Mg(2+) serves as cofactor.

It localises to the cytoplasm. The catalysed reaction is RNA(n+1) + phosphate = RNA(n) + a ribonucleoside 5'-diphosphate. In terms of biological role, involved in mRNA degradation. Catalyzes the phosphorolysis of single-stranded polyribonucleotides processively in the 3'- to 5'-direction. This Clavibacter sepedonicus (Clavibacter michiganensis subsp. sepedonicus) protein is Polyribonucleotide nucleotidyltransferase.